Here is a 170-residue protein sequence, read N- to C-terminus: RxLR effector protein PITG_07555 (170 aa).

The signal sequence occupies residues 1-17 (MQAYHLLLVCMYISCSA). A RxLR-dEER motif is present at residues 50 to 62 (RALRTHNPDREER).

The protein belongs to the RxLR effector family.

Its subcellular location is the secreted. It is found in the host cytoplasm. The protein localises to the host nucleus. Its function is as follows. Effector that enhances P.infestans colonization of Nicotiana benthamiana leaves. This chain is RxLR effector protein PITG_07555, found in Phytophthora infestans (strain T30-4) (Potato late blight agent).